We begin with the raw amino-acid sequence, 90 residues long: Small ribosomal subunit protein bS20 (90 aa).

The tract at residues 1-25 is disordered; it reads MANSAQARKRARQAAKANSHNSALR.

This sequence belongs to the bacterial ribosomal protein bS20 family.

Its function is as follows. Binds directly to 16S ribosomal RNA. The chain is Small ribosomal subunit protein bS20 from Burkholderia orbicola (strain MC0-3).